A 529-amino-acid chain; its full sequence is Bifunctional purine biosynthesis protein PurH (529 aa).

Residues 1–146 form the MGS-like domain; the sequence is MAPTALLSVS…KNHAHVAVLT (146 aa).

The protein belongs to the PurH family.

The catalysed reaction is (6R)-10-formyltetrahydrofolate + 5-amino-1-(5-phospho-beta-D-ribosyl)imidazole-4-carboxamide = 5-formamido-1-(5-phospho-D-ribosyl)imidazole-4-carboxamide + (6S)-5,6,7,8-tetrahydrofolate. It catalyses the reaction IMP + H2O = 5-formamido-1-(5-phospho-D-ribosyl)imidazole-4-carboxamide. It functions in the pathway purine metabolism; IMP biosynthesis via de novo pathway; 5-formamido-1-(5-phospho-D-ribosyl)imidazole-4-carboxamide from 5-amino-1-(5-phospho-D-ribosyl)imidazole-4-carboxamide (10-formyl THF route): step 1/1. The protein operates within purine metabolism; IMP biosynthesis via de novo pathway; IMP from 5-formamido-1-(5-phospho-D-ribosyl)imidazole-4-carboxamide: step 1/1. The polypeptide is Bifunctional purine biosynthesis protein PurH (Synechococcus sp. (strain CC9311)).